We begin with the raw amino-acid sequence, 397 residues long: Acetate kinase (397 aa).

Asn-8 contributes to the Mg(2+) binding site. Position 15 (Lys-15) interacts with ATP. Residue Arg-89 coordinates substrate. Residue Asp-146 is the Proton donor/acceptor of the active site. Residues 206–210, 281–283, and 329–333 contribute to the ATP site; these read HLGNG, DLR, and GVGEN. Glu-382 provides a ligand contact to Mg(2+).

Belongs to the acetokinase family. In terms of assembly, homodimer. Requires Mg(2+) as cofactor. Mn(2+) is required as a cofactor.

The protein resides in the cytoplasm. The catalysed reaction is acetate + ATP = acetyl phosphate + ADP. It participates in metabolic intermediate biosynthesis; acetyl-CoA biosynthesis; acetyl-CoA from acetate: step 1/2. In terms of biological role, catalyzes the formation of acetyl phosphate from acetate and ATP. Can also catalyze the reverse reaction. The sequence is that of Acetate kinase from Bacillus cereus (strain ATCC 14579 / DSM 31 / CCUG 7414 / JCM 2152 / NBRC 15305 / NCIMB 9373 / NCTC 2599 / NRRL B-3711).